Consider the following 245-residue polypeptide: 5'-nucleotidase SurE (245 aa).

Asp-8, Asp-9, Ser-39, and Asn-91 together coordinate a divalent metal cation.

Belongs to the SurE nucleotidase family. The cofactor is a divalent metal cation.

It is found in the cytoplasm. It catalyses the reaction a ribonucleoside 5'-phosphate + H2O = a ribonucleoside + phosphate. Nucleotidase that shows phosphatase activity on nucleoside 5'-monophosphates. The sequence is that of 5'-nucleotidase SurE from Janthinobacterium sp. (strain Marseille) (Minibacterium massiliensis).